The primary structure comprises 399 residues: 26S proteasome regulatory subunit 10B homolog A (399 aa).

N-acetylthreonine is present on threonine 2. 180 to 187 contacts ATP; it reads GPPGTGKT. A Glycyl lysine isopeptide (Lys-Gly) (interchain with G-Cter in ubiquitin) cross-link involves residue lysine 203.

Belongs to the AAA ATPase family. As to quaternary structure, component of the 19S regulatory particle (RP/PA700) base subcomplex of the 26S proteasome. The 26S proteasome is composed of a core protease (CP), known as the 20S proteasome, capped at one or both ends by the 19S regulatory particle (RP/PA700). The RP/PA700 complex is composed of at least 17 different subunits in two subcomplexes, the base and the lid, which form the portions proximal and distal to the 20S proteolytic core, respectively.

The protein resides in the cytoplasm. Its subcellular location is the nucleus. The 26S proteasome is involved in the ATP-dependent degradation of ubiquitinated proteins. The regulatory (or ATPase) complex confers ATP dependency and substrate specificity to the 26S complex. The protein is 26S proteasome regulatory subunit 10B homolog A (RPT4A) of Arabidopsis thaliana (Mouse-ear cress).